The chain runs to 199 residues: Outer-membrane lipoprotein LolB (199 aa).

The signal sequence occupies residues 1-28 (MSACPAPRSPVRWLHAFTLFLLLAVLAG). Cysteine 29 is lipidated: N-palmitoyl cysteine. Residue cysteine 29 is the site of S-diacylglycerol cysteine attachment.

The protein belongs to the LolB family. In terms of assembly, monomer.

It is found in the cell outer membrane. In terms of biological role, plays a critical role in the incorporation of lipoproteins in the outer membrane after they are released by the LolA protein. The polypeptide is Outer-membrane lipoprotein LolB (Bordetella pertussis (strain Tohama I / ATCC BAA-589 / NCTC 13251)).